The sequence spans 233 residues: Bcl-2-like protein 1 (233 aa).

The BH4 signature appears at 4–24 (SNRELVVDFLSYKLSQKGYSW). The tract at residues 29–71 (DVEENRTEAPEGTESEAETPSAINGNPSWHLADSPAVNGATGH) is disordered. Serine 49 carries the post-translational modification Phosphoserine; by PLK3. Phosphoserine; by CDK1 is present on serine 62. The BH3 signature appears at 86–100 (VKQALREAGDEFELR). The short motif at 129 to 148 (ELFRDGVNWGRIVAFFSFGG) is the BH1 element. The BH2 motif lies at 180–195 (PWIQENGGWDTFVELY). Residues 210–226 (FNRWFLTGMTLAGVVLL) form a helical membrane-spanning segment.

The protein belongs to the Bcl-2 family. In terms of assembly, homodimer. Heterodimers with BAX, BAK or BCL2. Heterodimerization with BAX does not seem to be required for anti-apoptotic activity. Interacts with BCL2L11. Interacts with BAD. Interacts with SIVA1 isoform 1; the interaction inhibits the anti-apoptotic activity. Interacts with BECN1 and PGAM5. Interacts with IKZF3. Interacts with HEBP2. Interacts with BOP. Interacts with p53/TP53 and BBC3; interaction with BBC3 disrupts the interaction with p53/TP53. Interacts with DNM1L and CLTA; DNM1L and BCL2L1 may form a complex in synaptic vesicles that also contains clathrin and MFF. Interacts with ATP5F1A and ATP5F1B; the interactions mediate the association of BCL2L1 with the mitochondrial membrane ATP synthase F(1)F(0) ATP synthase. Interacts with VDAC1. Interacts (via the loop between motifs BH4 and BH3) with NLRP1 (via LRR repeats), but not with NLRP2, NLRP3, NLRP4, PYCARD, nor MEFV. Interacts with BCL2L11 (via BH3). Interacts with RNF183. Interacts with GIMAP3/IAN4. Interacts with GIMAP5 and HSPA8/HSC70; the interaction between HSPA8 and BCL2L1 is impaired in the absence of GIMAP5. Interacts with CLU (isoform 4); this interaction releases and activates BAX and promotes cell death. In terms of processing, proteolytically cleaved by caspases during apoptosis. The cleaved protein, lacking the BH4 motif, has pro-apoptotic activity. Post-translationally, phosphorylated on Ser-62 by CDK1. This phosphorylation is partial in normal mitotic cells, but complete in G2-arrested cells upon DNA-damage, thus promoting subsequent apoptosis probably by triggering caspases-mediated proteolysis. Phosphorylated by PLK3, leading to regulate the G2 checkpoint and progression to cytokinesis during mitosis. Phosphorylation at Ser-49 appears during the S phase and G2, disappears rapidly in early mitosis during prometaphase, metaphase and early anaphase, and re-appears during telophase and cytokinesis. Ubiquitinated by RNF183 during prolonged ER stress, leading to degradation by the proteosome.

The protein resides in the mitochondrion membrane. Its subcellular location is the nucleus membrane. It is found in the mitochondrion matrix. The protein localises to the cytoplasm. It localises to the cytoskeleton. The protein resides in the microtubule organizing center. Its subcellular location is the centrosome. It is found in the cytosol. The protein localises to the cytoplasmic vesicle. It localises to the secretory vesicle. The protein resides in the synaptic vesicle membrane. Functionally, potent inhibitor of cell death. Inhibits activation of caspases. Appears to regulate cell death by blocking the voltage-dependent anion channel (VDAC) by binding to it and preventing the release of the caspase activator, CYC1, from the mitochondrial membrane. Also acts as a regulator of G2 checkpoint and progression to cytokinesis during mitosis. Regulates presynaptic plasticity, including neurotransmitter release and recovery, number of axonal mitochondria as well as size and number of synaptic vesicle clusters. During synaptic stimulation, increases ATP availability from mitochondria through regulation of mitochondrial membrane ATP synthase F(1)F(0) activity and regulates endocytic vesicle retrieval in hippocampal neurons through association with DMN1L and stimulation of its GTPase activity in synaptic vesicles. May attenuate inflammation impairing NLRP1-inflammasome activation, hence CASP1 activation and IL1B release. In Sus scrofa (Pig), this protein is Bcl-2-like protein 1 (BCL2L1).